We begin with the raw amino-acid sequence, 828 residues long: Periplasmic nitrate reductase (828 aa).

The segment at residues M1 to A31 is a signal peptide (tat-type signal). Residues I39 to D95 enclose the 4Fe-4S Mo/W bis-MGD-type domain. C46, C49, C53, and C81 together coordinate [4Fe-4S] cluster. Mo-bis(molybdopterin guanine dinucleotide)-binding positions include K83, Q150, N175, C179, W212–M219, S243–H247, Q262–D264, M372, Q376, N482, S508–D509, K531, D558, and T718–T727. Residue F794 coordinates substrate. Positions 802 and 819 each coordinate Mo-bis(molybdopterin guanine dinucleotide).

Belongs to the prokaryotic molybdopterin-containing oxidoreductase family. NasA/NapA/NarB subfamily. Component of the periplasmic nitrate reductase NapAB complex composed of NapA and NapB. Requires [4Fe-4S] cluster as cofactor. Mo-bis(molybdopterin guanine dinucleotide) serves as cofactor. Predicted to be exported by the Tat system. The position of the signal peptide cleavage has not been experimentally proven.

The protein localises to the periplasm. The enzyme catalyses 2 Fe(II)-[cytochrome] + nitrate + 2 H(+) = 2 Fe(III)-[cytochrome] + nitrite + H2O. In terms of biological role, catalytic subunit of the periplasmic nitrate reductase complex NapAB. Receives electrons from NapB and catalyzes the reduction of nitrate to nitrite. This Shigella flexneri serotype 5b (strain 8401) protein is Periplasmic nitrate reductase.